The primary structure comprises 53 residues: MAVPKKRTSKSKKKSRRSHWINKAKTRIRNFLNLAKSISNKKATSFAYSTIKN.

The segment at 1–21 is disordered; it reads MAVPKKRTSKSKKKSRRSHWI.

Belongs to the bacterial ribosomal protein bL32 family.

It localises to the plastid. It is found in the chloroplast. In Cyanidium caldarium (Red alga), this protein is Large ribosomal subunit protein bL32c (rpl32).